We begin with the raw amino-acid sequence, 481 residues long: MAQPATPRTMAEKVWADHVVAHGIGEGAAREPDLIYIDLHLVHEVTSPQAFDGLRLANRPVRRPDLTIATEDHNVPTVDIDKPIADPVSRTQVETLRRNCAEFGIRLHPMGDAEQGIVHIIGPQLGLTQPGMTVVCGDSHTSTHGAFGALAMGIGTSEVEHVLATQTLPLRPFRTMAVNVDGELPPGVSAKDIILAVIAKIGTGGGQGHVIEYRGSAIESLSMEGRMTICNMSIEAGARAGMVAPDDTTFEFLRGRPHAPTGADWDAAVEAWRQLRTDPGAEFDTEVHLDAAELSPFVTWGTNPGQGVPLSGAVPDPELIVDEGERQAAEKALTYMGLQAGTAMRDVAVDTVFVGSCTNGRIEDLRVVADVLRGRRVADGIRMLVVPGSMRVRAQAESEGLDRIFIDAGAEWRQAGCSMCLGMNPDQLSPGQRCASTSNRNFEGRQGKGGRTHLVSPAVAAATAVRGTLSSPADLSAVPAR.

[4Fe-4S] cluster contacts are provided by C357, C417, and C420. A compositionally biased stretch (polar residues) spans S429–N441. A disordered region spans residues S429–R451.

The protein belongs to the aconitase/IPM isomerase family. LeuC type 1 subfamily. Heterodimer of LeuC and LeuD. [4Fe-4S] cluster serves as cofactor.

The enzyme catalyses (2R,3S)-3-isopropylmalate = (2S)-2-isopropylmalate. It functions in the pathway amino-acid biosynthesis; L-leucine biosynthesis; L-leucine from 3-methyl-2-oxobutanoate: step 2/4. Its function is as follows. Catalyzes the isomerization between 2-isopropylmalate and 3-isopropylmalate, via the formation of 2-isopropylmaleate. This is 3-isopropylmalate dehydratase large subunit from Mycobacterium sp. (strain KMS).